The sequence spans 205 residues: Beta-crystallin B2 (205 aa).

Ala2 carries the post-translational modification N-acetylalanine. Positions 2–16 (ASDHQTQAGKPQSLN) are N-terminal arm. Beta/gamma crystallin 'Greek key' domains are found at residues 17–56 (PKII…LVQA) and 57–101 (GPWV…RPIK). A connecting peptide region spans residues 102–106 (VDSQE). Beta/gamma crystallin 'Greek key' domains follow at residues 107–148 (HKII…RVQS) and 149–191 (GTWV…RRIR). A C-terminal arm region spans residues 193 to 205 (MQWHQRGAFHPSN).

Belongs to the beta/gamma-crystallin family. Homo/heterodimer, or complexes of higher-order. The structure of beta-crystallin oligomers seems to be stabilized through interactions between the N-terminal arms.

Functionally, crystallins are the dominant structural components of the vertebrate eye lens. The polypeptide is Beta-crystallin B2 (CRYBB2) (Homo sapiens (Human)).